The chain runs to 175 residues: Transcriptional repressor NrdR (175 aa).

A zinc finger spans residues 3–32; it reads CPYCSHPDSKVIDSRDVDDGVRRRRECVVC. Positions 47–137 constitute an ATP-cone domain; it reads LFVVKKDQRR…VYREFTDITQ (91 aa).

This sequence belongs to the NrdR family. Requires Zn(2+) as cofactor.

Functionally, negatively regulates transcription of bacterial ribonucleotide reductase nrd genes and operons by binding to NrdR-boxes. The chain is Transcriptional repressor NrdR from Dehalococcoides mccartyi (strain CBDB1).